The chain runs to 160 residues: SsrA-binding protein (160 aa).

This sequence belongs to the SmpB family.

It localises to the cytoplasm. Required for rescue of stalled ribosomes mediated by trans-translation. Binds to transfer-messenger RNA (tmRNA), required for stable association of tmRNA with ribosomes. tmRNA and SmpB together mimic tRNA shape, replacing the anticodon stem-loop with SmpB. tmRNA is encoded by the ssrA gene; the 2 termini fold to resemble tRNA(Ala) and it encodes a 'tag peptide', a short internal open reading frame. During trans-translation Ala-aminoacylated tmRNA acts like a tRNA, entering the A-site of stalled ribosomes, displacing the stalled mRNA. The ribosome then switches to translate the ORF on the tmRNA; the nascent peptide is terminated with the 'tag peptide' encoded by the tmRNA and targeted for degradation. The ribosome is freed to recommence translation, which seems to be the essential function of trans-translation. This is SsrA-binding protein from Erwinia tasmaniensis (strain DSM 17950 / CFBP 7177 / CIP 109463 / NCPPB 4357 / Et1/99).